We begin with the raw amino-acid sequence, 201 residues long: MINKAILGGTFDPIHNAHINVAYEALERFNLEEVIFIPAGNPPHKINLKKTPAHIRYEMVKLAIEKETRFSISDFEIKSKSLSYTYRTLKHFKEKEPETNWYFITGEDCLSYLEHWKYIDEIFNICNFVIFSREGFKEKEEIIKKKKSILLKYRKEILFMDASILDISSTKIRNRIKEGKEVSFYMPDKVYKFILQNNLYK.

Belongs to the NadD family.

It carries out the reaction nicotinate beta-D-ribonucleotide + ATP + H(+) = deamido-NAD(+) + diphosphate. It participates in cofactor biosynthesis; NAD(+) biosynthesis; deamido-NAD(+) from nicotinate D-ribonucleotide: step 1/1. Functionally, catalyzes the reversible adenylation of nicotinate mononucleotide (NaMN) to nicotinic acid adenine dinucleotide (NaAD). The protein is Probable nicotinate-nucleotide adenylyltransferase of Clostridium botulinum (strain Okra / Type B1).